A 155-amino-acid chain; its full sequence is 3-hydroxyacyl-[acyl-carrier-protein] dehydratase FabZ (155 aa).

H59 is a catalytic residue.

The protein belongs to the thioester dehydratase family. FabZ subfamily.

It is found in the cytoplasm. The enzyme catalyses a (3R)-hydroxyacyl-[ACP] = a (2E)-enoyl-[ACP] + H2O. Involved in unsaturated fatty acids biosynthesis. Catalyzes the dehydration of short chain beta-hydroxyacyl-ACPs and long chain saturated and unsaturated beta-hydroxyacyl-ACPs. The sequence is that of 3-hydroxyacyl-[acyl-carrier-protein] dehydratase FabZ from Bartonella henselae (strain ATCC 49882 / DSM 28221 / CCUG 30454 / Houston 1) (Rochalimaea henselae).